The sequence spans 299 residues: Protein-methionine-sulfoxide reductase catalytic subunit MsrP (299 aa).

The tat-type signal signal peptide spans 1–44 (MAHRWINDLTPADITPRGAWMNRRQVMAGMAGAGLAAFAGSAQA). Residues Asn59, 62–63 (YE), Cys117, Thr152, Asn200, Arg205, and 216–218 (SIK) contribute to the Mo-molybdopterin site.

It belongs to the MsrP family. Heterodimer of a catalytic subunit (MsrP) and a heme-binding subunit (MsrQ). Requires Mo-molybdopterin as cofactor. Predicted to be exported by the Tat system. The position of the signal peptide cleavage has not been experimentally proven.

It localises to the periplasm. The enzyme catalyses L-methionyl-[protein] + a quinone + H2O = L-methionyl-(S)-S-oxide-[protein] + a quinol. It catalyses the reaction L-methionyl-[protein] + a quinone + H2O = L-methionyl-(R)-S-oxide-[protein] + a quinol. Part of the MsrPQ system that repairs oxidized periplasmic proteins containing methionine sulfoxide residues (Met-O), using respiratory chain electrons. Thus protects these proteins from oxidative-stress damage caused by reactive species of oxygen and chlorine generated by the host defense mechanisms. MsrPQ is essential for the maintenance of envelope integrity under bleach stress, rescuing a wide series of structurally unrelated periplasmic proteins from methionine oxidation. The catalytic subunit MsrP is non-stereospecific, being able to reduce both (R-) and (S-) diastereoisomers of methionine sulfoxide. In Ruegeria pomeroyi (strain ATCC 700808 / DSM 15171 / DSS-3) (Silicibacter pomeroyi), this protein is Protein-methionine-sulfoxide reductase catalytic subunit MsrP.